Here is a 630-residue protein sequence, read N- to C-terminus: Peptidyl-prolyl cis-trans isomerase cyp15 (630 aa).

A disordered region spans residues 1 to 46; it reads MPEDSNTNDNNKRPLEDNNAVDGESDDDIGPMLPPPPGEDAPRKKK. 5 WD repeats span residues 70 to 108, 113 to 152, 157 to 198, 203 to 242, and 258 to 301; these read MHRD…IEFV, SHLS…MINM, YKPK…KPLH, MHSK…ALPD, and RKKK…REYD. The region spanning 475 to 629 is the PPIase cyclophilin-type domain; the sequence is LGTSAIIRTT…DDIKIINIDI (155 aa).

It belongs to the cyclophilin-type PPIase family.

It catalyses the reaction [protein]-peptidylproline (omega=180) = [protein]-peptidylproline (omega=0). Functionally, PPIases accelerate the folding of proteins. It catalyzes the cis-trans isomerization of proline imidic peptide bonds in oligopeptides. In Rhizopus delemar (strain RA 99-880 / ATCC MYA-4621 / FGSC 9543 / NRRL 43880) (Mucormycosis agent), this protein is Peptidyl-prolyl cis-trans isomerase cyp15 (cyp15).